The following is a 384-amino-acid chain: 1-deoxy-D-xylulose 5-phosphate reductoisomerase (384 aa).

Threonine 11, glycine 12, serine 13, isoleucine 14, lysine 38, and asparagine 123 together coordinate NADPH. Lysine 124 lines the 1-deoxy-D-xylulose 5-phosphate pocket. Glutamate 125 is a binding site for NADPH. Aspartate 148 is a Mn(2+) binding site. Residues serine 149, glutamate 150, serine 174, and histidine 197 each contribute to the 1-deoxy-D-xylulose 5-phosphate site. Position 150 (glutamate 150) interacts with Mn(2+). NADPH is bound at residue glycine 203. Residues serine 210, asparagine 215, lysine 216, and glutamate 219 each contribute to the 1-deoxy-D-xylulose 5-phosphate site. Glutamate 219 contacts Mn(2+).

This sequence belongs to the DXR family. It depends on Mg(2+) as a cofactor. Mn(2+) is required as a cofactor.

The enzyme catalyses 2-C-methyl-D-erythritol 4-phosphate + NADP(+) = 1-deoxy-D-xylulose 5-phosphate + NADPH + H(+). It participates in isoprenoid biosynthesis; isopentenyl diphosphate biosynthesis via DXP pathway; isopentenyl diphosphate from 1-deoxy-D-xylulose 5-phosphate: step 1/6. Its function is as follows. Catalyzes the NADPH-dependent rearrangement and reduction of 1-deoxy-D-xylulose-5-phosphate (DXP) to 2-C-methyl-D-erythritol 4-phosphate (MEP). This chain is 1-deoxy-D-xylulose 5-phosphate reductoisomerase, found in Halothermothrix orenii (strain H 168 / OCM 544 / DSM 9562).